The primary structure comprises 136 residues: Invertebrate-type lysozyme (136 aa).

Residues 1–11 (METVSVEEGLD) form the signal peptide. Positions 14-130 (PGMVSQKCLL…WELLQKIPGC (117 aa)) constitute an I-type lysozyme domain. Disulfide bonds link C21-C98, C24-C130, C26-C33, C38-C47, C60-C80, C70-C76, and C94-C112. E29 serves as the catalytic Proton donor. D41 functions as the Nucleophile in the catalytic mechanism. 53–59 (KQPYWID) provides a ligand contact to substrate. N75 carries an N-linked (GlcNAc...) asparagine glycan. Substrate-binding positions include Y84, Y92, 105 to 107 (HNG), and K119.

Homodimer in its autoinhibited state. Active as monomer.

The protein resides in the secreted. The enzyme catalyses Hydrolysis of (1-&gt;4)-beta-linkages between N-acetylmuramic acid and N-acetyl-D-glucosamine residues in a peptidoglycan and between N-acetyl-D-glucosamine residues in chitodextrins.. Its activity is regulated as follows. Chitinase activity is activated by high salt concentrations which cause the release of the monomer from the autoinhibited homodimer. Functionally, bacteriolytic activity against Gram-positive bacterium M.luteus and thereby probably protects against bacterial infection. Also has chitinase activity. May act as an ispopeptidase, cleaving isopeptide bonds between the side chains of Lys and Gln residues in proteins or in the cross-linking peptide of peptidoglycan in bacterial cell walls. This Ruditapes philippinarum (Japanese carpet shell) protein is Invertebrate-type lysozyme.